The chain runs to 355 residues: Phosphoserine aminotransferase (355 aa).

Arg-41 contributes to the L-glutamate binding site. Pyridoxal 5'-phosphate is bound by residues 75–76 (AS), Trp-99, Thr-147, Asp-166, and Gln-189. The residue at position 190 (Lys-190) is an N6-(pyridoxal phosphate)lysine. 231–232 (NT) provides a ligand contact to pyridoxal 5'-phosphate.

Belongs to the class-V pyridoxal-phosphate-dependent aminotransferase family. SerC subfamily. Homodimer. Pyridoxal 5'-phosphate serves as cofactor.

Its subcellular location is the cytoplasm. The catalysed reaction is O-phospho-L-serine + 2-oxoglutarate = 3-phosphooxypyruvate + L-glutamate. The enzyme catalyses 4-(phosphooxy)-L-threonine + 2-oxoglutarate = (R)-3-hydroxy-2-oxo-4-phosphooxybutanoate + L-glutamate. Its pathway is amino-acid biosynthesis; L-serine biosynthesis; L-serine from 3-phospho-D-glycerate: step 2/3. The protein operates within cofactor biosynthesis; pyridoxine 5'-phosphate biosynthesis; pyridoxine 5'-phosphate from D-erythrose 4-phosphate: step 3/5. Its function is as follows. Catalyzes the reversible conversion of 3-phosphohydroxypyruvate to phosphoserine and of 3-hydroxy-2-oxo-4-phosphonooxybutanoate to phosphohydroxythreonine. This Bacteroides thetaiotaomicron (strain ATCC 29148 / DSM 2079 / JCM 5827 / CCUG 10774 / NCTC 10582 / VPI-5482 / E50) protein is Phosphoserine aminotransferase.